A 450-amino-acid chain; its full sequence is tRNA-2-methylthio-N(6)-dimethylallyladenosine synthase (450 aa).

The region spanning 3–119 is the MTTase N-terminal domain; sequence RRYYITTFGC…LGELLEQVWN (117 aa). Positions 12, 48, 82, 154, 158, and 161 each coordinate [4Fe-4S] cluster. In terms of domain architecture, Radical SAM core spans 140–377; sequence RDSTVTAWVN…NHLVAKIAGD (238 aa). In terms of domain architecture, TRAM spans 380-444; that stretch reads QRYLGREEVV…AFSLSGVPLA (65 aa).

This sequence belongs to the methylthiotransferase family. MiaB subfamily. As to quaternary structure, monomer. [4Fe-4S] cluster serves as cofactor.

It localises to the cytoplasm. The catalysed reaction is N(6)-dimethylallyladenosine(37) in tRNA + (sulfur carrier)-SH + AH2 + 2 S-adenosyl-L-methionine = 2-methylsulfanyl-N(6)-dimethylallyladenosine(37) in tRNA + (sulfur carrier)-H + 5'-deoxyadenosine + L-methionine + A + S-adenosyl-L-homocysteine + 2 H(+). Catalyzes the methylthiolation of N6-(dimethylallyl)adenosine (i(6)A), leading to the formation of 2-methylthio-N6-(dimethylallyl)adenosine (ms(2)i(6)A) at position 37 in tRNAs that read codons beginning with uridine. This chain is tRNA-2-methylthio-N(6)-dimethylallyladenosine synthase, found in Thermosynechococcus vestitus (strain NIES-2133 / IAM M-273 / BP-1).